A 78-amino-acid polypeptide reads, in one-letter code: Translation initiation factor IF-1 (78 aa).

Positions Lys-4–Lys-78 constitute an S1-like domain.

This sequence belongs to the IF-1 family. In terms of assembly, component of the 30S ribosomal translation pre-initiation complex which assembles on the 30S ribosome in the order IF-2 and IF-3, IF-1 and N-formylmethionyl-tRNA(fMet); mRNA recruitment can occur at any time during PIC assembly.

It localises to the cytoplasm. One of the essential components for the initiation of protein synthesis. Stabilizes the binding of IF-2 and IF-3 on the 30S subunit to which N-formylmethionyl-tRNA(fMet) subsequently binds. Helps modulate mRNA selection, yielding the 30S pre-initiation complex (PIC). Upon addition of the 50S ribosomal subunit IF-1, IF-2 and IF-3 are released leaving the mature 70S translation initiation complex. This chain is Translation initiation factor IF-1, found in Mycoplasma pneumoniae (strain ATCC 29342 / M129 / Subtype 1) (Mycoplasmoides pneumoniae).